Consider the following 155-residue polypeptide: Ribosome maturation factor RimP (155 aa).

This sequence belongs to the RimP family.

Its subcellular location is the cytoplasm. Functionally, required for maturation of 30S ribosomal subunits. The sequence is that of Ribosome maturation factor RimP from Prochlorococcus marinus (strain MIT 9301).